A 219-amino-acid polypeptide reads, in one-letter code: Regulatory protein YeiL (219 aa).

The interval 19 to 97 (RLFHFLARDY…IEECWCLALP (79 aa)) is sensory domain. Cysteine 68, cysteine 91, cysteine 93, and cysteine 116 together coordinate [4Fe-4S] cluster. Residues 111–131 (FLRKLCVTLSHKNYRNIVSLT) form a dimer interface region. Residues 136-199 (FPLVNRLAAF…KKGYLIKNRK (64 aa)) form the HTH crp-type domain. The H-T-H motif DNA-binding region spans 158-181 (KHTQAAEYLGVSYRHLLYVLAQFI).

In terms of assembly, homodimer. The cofactor is [4Fe-4S] cluster.

The protein resides in the cytoplasm. In terms of biological role, transcription regulator involved in mid-term, stationary-phase viability under nitrogen starvation. Might control expression of the salvage pathways or in some other way repress the recycling of nucleobases to nucleic acids and enhance their use as general nitrogen sources during nitrogen-limited growth. The chain is Regulatory protein YeiL (yeiL) from Escherichia coli O157:H7.